Reading from the N-terminus, the 378-residue chain is IDS-type sesquiterpene synthase (378 aa).

Mg(2+)-binding residues include Asp-120 and Asp-124. Residues 120–124 (DDYVD) carry the DDXXD motif motif.

It belongs to the terpene synthase family. The cofactor is Mg(2+). In terms of tissue distribution, highly expressed in male epidermal tissue associated with the cuticle of ventral sternites.

It carries out the reaction (2Z,6E)-farnesyl diphosphate = (Z)-alpha-bisabolene + diphosphate. It functions in the pathway pheromone biosynthesis. Sesquiterpene alcohol synthase that catalyzes the formation of the pheromone precursor (Z)-alpha-bisabolene from (2Z,6E)-farnesyl diphosphate. In Nezara viridula (Southern green stink bug), this protein is IDS-type sesquiterpene synthase.